A 129-amino-acid chain; its full sequence is Small ribosomal subunit protein uS11 (129 aa).

Belongs to the universal ribosomal protein uS11 family. Part of the 30S ribosomal subunit. Interacts with proteins S7 and S18. Binds to IF-3.

Its function is as follows. Located on the platform of the 30S subunit, it bridges several disparate RNA helices of the 16S rRNA. Forms part of the Shine-Dalgarno cleft in the 70S ribosome. The protein is Small ribosomal subunit protein uS11 of Pasteurella multocida (strain Pm70).